Here is a 189-residue protein sequence, read N- to C-terminus: ATP synthase subunit b (189 aa).

Residues 23-43 (IEIVLSLVVFGLLLFAVWKFV) form a helical membrane-spanning segment.

This sequence belongs to the ATPase B chain family. In terms of assembly, F-type ATPases have 2 components, F(1) - the catalytic core - and F(0) - the membrane proton channel. F(1) has five subunits: alpha(3), beta(3), gamma(1), delta(1), epsilon(1). F(0) has three main subunits: a(1), b(2) and c(10-14). The alpha and beta chains form an alternating ring which encloses part of the gamma chain. F(1) is attached to F(0) by a central stalk formed by the gamma and epsilon chains, while a peripheral stalk is formed by the delta and b chains.

It is found in the cell membrane. Its function is as follows. F(1)F(0) ATP synthase produces ATP from ADP in the presence of a proton or sodium gradient. F-type ATPases consist of two structural domains, F(1) containing the extramembraneous catalytic core and F(0) containing the membrane proton channel, linked together by a central stalk and a peripheral stalk. During catalysis, ATP synthesis in the catalytic domain of F(1) is coupled via a rotary mechanism of the central stalk subunits to proton translocation. In terms of biological role, component of the F(0) channel, it forms part of the peripheral stalk, linking F(1) to F(0). This is ATP synthase subunit b from Nocardioides sp. (strain ATCC BAA-499 / JS614).